We begin with the raw amino-acid sequence, 475 residues long: 3-isopropylmalate dehydratase large subunit (475 aa).

Residues C353, C414, and C417 each coordinate [4Fe-4S] cluster.

Belongs to the aconitase/IPM isomerase family. LeuC type 1 subfamily. In terms of assembly, heterodimer of LeuC and LeuD. It depends on [4Fe-4S] cluster as a cofactor.

It carries out the reaction (2R,3S)-3-isopropylmalate = (2S)-2-isopropylmalate. It functions in the pathway amino-acid biosynthesis; L-leucine biosynthesis; L-leucine from 3-methyl-2-oxobutanoate: step 2/4. Its function is as follows. Catalyzes the isomerization between 2-isopropylmalate and 3-isopropylmalate, via the formation of 2-isopropylmaleate. This is 3-isopropylmalate dehydratase large subunit from Stutzerimonas stutzeri (strain A1501) (Pseudomonas stutzeri).